The sequence spans 97 residues: Apolipoprotein C-II (97 aa).

A signal peptide spans 1–22 (MGSRFFLALFLVLLVLGNEVQG). The lipid binding stretch occupies residues 63-71 (SVDEKLRDM). Positions 75–97 (SSAAMSTYAGIFTDQLLTLLKGE) are lipoprotein lipase cofactor.

It belongs to the apolipoprotein C2 family. In terms of processing, proapolipoprotein C-II is synthesized as a sialic acid containing glycoprotein which is subsequently desialylated prior to its proteolytic processing. Proapolipoprotein C-II, the major form found in plasma undergoes proteolytic cleavage of its N-terminal hexapeptide to generate the mature form apolipoprotein C-II, which occurs as the minor form in plasma.

Its subcellular location is the secreted. Component of chylomicrons, very low-density lipoproteins (VLDL), low-density lipoproteins (LDL), and high-density lipoproteins (HDL) in plasma. Plays an important role in lipoprotein metabolism as an activator of lipoprotein lipase. This is Apolipoprotein C-II (Apoc2) from Grammomys surdaster (African woodland thicket rat).